The following is a 504-amino-acid chain: Deoxyguanosinetriphosphate triphosphohydrolase (504 aa).

The 208-residue stretch at 66–273 (RLTHSLEVQQ…MEAADDISYC (208 aa)) folds into the HD domain.

This sequence belongs to the dGTPase family. Type 1 subfamily. Homotetramer. Mg(2+) serves as cofactor.

It catalyses the reaction dGTP + H2O = 2'-deoxyguanosine + triphosphate + H(+). Its function is as follows. dGTPase preferentially hydrolyzes dGTP over the other canonical NTPs. The protein is Deoxyguanosinetriphosphate triphosphohydrolase of Cronobacter sakazakii (strain ATCC BAA-894) (Enterobacter sakazakii).